The sequence spans 44 residues: Photosystem I reaction center subunit IX (44 aa).

The chain crosses the membrane as a helical span at residues 9–29 (YMRSAPVVAAAWITMTAGIII).

The protein belongs to the PsaJ family.

It is found in the cellular thylakoid membrane. Functionally, may help in the organization of the PsaE and PsaF subunits. The protein is Photosystem I reaction center subunit IX of Prochlorococcus marinus (strain MIT 9312).